The sequence spans 63 residues: Beta-defensin 4 (63 aa).

An N-terminal signal peptide occupies residues 1–22; sequence MRIHYLLFSFLLVLLSPLSAFT. Residue glutamine 23 is modified to Pyrrolidone carboxylic acid. Intrachain disulfides connect cysteine 31–cysteine 59, cysteine 38–cysteine 52, and cysteine 42–cysteine 60.

It belongs to the beta-defensin family. As to expression, highly expressed in lung.

The protein resides in the secreted. Its function is as follows. Exhibits antimicrobial activity against Gram-negative bacteria and Gram-positive bacteria. May act as a ligand for C-C chemokine receptor CCR6. Binds to CCR6 and induces chemotactic activity of CCR6-expressing cells. This Rattus norvegicus (Rat) protein is Beta-defensin 4 (Defb4).